The following is a 260-amino-acid chain: 3-deoxy-manno-octulosonate cytidylyltransferase (260 aa).

Belongs to the KdsB family.

It localises to the cytoplasm. The catalysed reaction is 3-deoxy-alpha-D-manno-oct-2-ulosonate + CTP = CMP-3-deoxy-beta-D-manno-octulosonate + diphosphate. It functions in the pathway nucleotide-sugar biosynthesis; CMP-3-deoxy-D-manno-octulosonate biosynthesis; CMP-3-deoxy-D-manno-octulosonate from 3-deoxy-D-manno-octulosonate and CTP: step 1/1. It participates in bacterial outer membrane biogenesis; lipopolysaccharide biosynthesis. Its function is as follows. Activates KDO (a required 8-carbon sugar) for incorporation into bacterial lipopolysaccharide in Gram-negative bacteria. This Polaromonas naphthalenivorans (strain CJ2) protein is 3-deoxy-manno-octulosonate cytidylyltransferase.